We begin with the raw amino-acid sequence, 415 residues long: Tyrosine--tRNA ligase (415 aa).

The 'HIGH' region signature appears at 54–63 (PTGSNIHLGH). Residues 248-252 (KMSKT) carry the 'KMSKS' region motif. Lys251 is a binding site for ATP. Residues 351-415 (AKAFYLMSAV…GKKTFRRLTA (65 aa)) enclose the S4 RNA-binding domain.

Belongs to the class-I aminoacyl-tRNA synthetase family. TyrS type 2 subfamily. Homodimer.

Its subcellular location is the cytoplasm. It catalyses the reaction tRNA(Tyr) + L-tyrosine + ATP = L-tyrosyl-tRNA(Tyr) + AMP + diphosphate + H(+). Functionally, catalyzes the attachment of tyrosine to tRNA(Tyr) in a two-step reaction: tyrosine is first activated by ATP to form Tyr-AMP and then transferred to the acceptor end of tRNA(Tyr). The protein is Tyrosine--tRNA ligase of Synechococcus sp. (strain CC9902).